The sequence spans 193 residues: Cytidylate kinase (193 aa).

Residue 12–20 (GLAGSGTTT) coordinates ATP.

It belongs to the cytidylate kinase family. Type 2 subfamily.

It localises to the cytoplasm. It carries out the reaction CMP + ATP = CDP + ADP. It catalyses the reaction dCMP + ATP = dCDP + ADP. The sequence is that of Cytidylate kinase from Thermococcus kodakarensis (strain ATCC BAA-918 / JCM 12380 / KOD1) (Pyrococcus kodakaraensis (strain KOD1)).